Reading from the N-terminus, the 634-residue chain is Biosynthetic arginine decarboxylase (634 aa).

Residue K103 is modified to N6-(pyridoxal phosphate)lysine. 283-293 (FDVGGGLGVDY) serves as a coordination point for substrate.

This sequence belongs to the Orn/Lys/Arg decarboxylase class-II family. SpeA subfamily. Mg(2+) serves as cofactor. Pyridoxal 5'-phosphate is required as a cofactor.

It catalyses the reaction L-arginine + H(+) = agmatine + CO2. It functions in the pathway amine and polyamine biosynthesis; agmatine biosynthesis; agmatine from L-arginine: step 1/1. In terms of biological role, catalyzes the biosynthesis of agmatine from arginine. In Photorhabdus laumondii subsp. laumondii (strain DSM 15139 / CIP 105565 / TT01) (Photorhabdus luminescens subsp. laumondii), this protein is Biosynthetic arginine decarboxylase.